A 49-amino-acid polypeptide reads, in one-letter code: MKLFILDYEKKRTKIGKGMARRELKMMNKKPDLYTIIVSYFSIFSLFFF.

The chain crosses the membrane as a helical span at residues 31-48 (PDLYTIIVSYFSIFSLFF).

It localises to the membrane. This is an uncharacterized protein from Saccharomyces cerevisiae (strain ATCC 204508 / S288c) (Baker's yeast).